The sequence spans 159 residues: MKTHLLLWGVLAIFVKAVLVTGDDEATILADNKCMCTRVTSRIIPSTEDPNEDIVERNIRIVVPLNNRENISDPTSPLRRNFVYHLSDVCKKCDPVEVELEDQVVTATQSNICNEDDGVPETCYMYDRNKCYTTMVPLRYHGETKMVQAALTPDSCYPD.

An N-terminal signal peptide occupies residues 1–21 (MKTHLLLWGVLAIFVKAVLVT). Cystine bridges form between C34-C123, C93-C113, and C131-C156. N70 is a glycosylation site (N-linked (GlcNAc...) (complex) asparagine).

As to quaternary structure, part of the secretory IgA (sIgA) complex that consists of two, four or five IgA monomers, and two additional non-Ig polypeptides, namely the JCHAIN and the secretory component (the proteolytic product of PIGR). Part of the secretory IgM (sIgM) complex that consist of five IgM monomers, and two additional non-Ig polypeptides, namely the JCHAIN and the secretory component (the proteolytic product of PIGR). JCHAIN-containing IgM interacts (via CH4 domain) with FCRM (via Ig-like domain).

The protein resides in the secreted. Functionally, serves to link two monomer units of either IgM or IgA. In the case of IgM, the J chain-joined dimer is a nucleating unit for the IgM pentamer, and in the case of IgA it induces dimers and/or larger polymers. It also helps to bind these immunoglobulins to secretory component. This is Immunoglobulin J chain from Mus musculus (Mouse).